A 124-amino-acid polypeptide reads, in one-letter code: Large ribosomal subunit protein bL12 (124 aa).

The protein belongs to the bacterial ribosomal protein bL12 family. As to quaternary structure, homodimer. Part of the ribosomal stalk of the 50S ribosomal subunit. Forms a multimeric L10(L12)X complex, where L10 forms an elongated spine to which 2 to 4 L12 dimers bind in a sequential fashion. Binds GTP-bound translation factors.

Its function is as follows. Forms part of the ribosomal stalk which helps the ribosome interact with GTP-bound translation factors. Is thus essential for accurate translation. The chain is Large ribosomal subunit protein bL12 from Burkholderia lata (strain ATCC 17760 / DSM 23089 / LMG 22485 / NCIMB 9086 / R18194 / 383).